Reading from the N-terminus, the 276-residue chain is Diaminopimelate epimerase (276 aa).

Residues Asn-13, Gln-46, and Asn-66 each coordinate substrate. The active-site Proton donor is Cys-75. Substrate contacts are provided by residues 76 to 77, Asn-159, Asn-192, and 210 to 211; these read GN and ER. The active-site Proton acceptor is the Cys-219. A substrate-binding site is contributed by 220 to 221; it reads GT.

Belongs to the diaminopimelate epimerase family. Homodimer.

It localises to the cytoplasm. The catalysed reaction is (2S,6S)-2,6-diaminopimelate = meso-2,6-diaminopimelate. The protein operates within amino-acid biosynthesis; L-lysine biosynthesis via DAP pathway; DL-2,6-diaminopimelate from LL-2,6-diaminopimelate: step 1/1. In terms of biological role, catalyzes the stereoinversion of LL-2,6-diaminopimelate (L,L-DAP) to meso-diaminopimelate (meso-DAP), a precursor of L-lysine and an essential component of the bacterial peptidoglycan. This Pseudomonas entomophila (strain L48) protein is Diaminopimelate epimerase.